Here is a 926-residue protein sequence, read N- to C-terminus: Bifunctional uridylyltransferase/uridylyl-removing enzyme (926 aa).

Residues 1-379 form a uridylyltransferase region; that stretch reads MPVSFLSLAS…PKSRRSGASK (379 aa). The segment at 380–736 is uridylyl-removing; that stretch reads QIDGFPVIQG…GHEMPAYDAT (357 aa). An HD domain is found at 496–618; that stretch reads VDEHAIRALD…VKSPERLRLL (123 aa). 2 consecutive ACT domains span residues 737 to 814 and 849 to 926; these read MISL…IRSS and VIEV…ISEK.

The protein belongs to the GlnD family. The cofactor is Mg(2+).

The catalysed reaction is [protein-PII]-L-tyrosine + UTP = [protein-PII]-uridylyl-L-tyrosine + diphosphate. It catalyses the reaction [protein-PII]-uridylyl-L-tyrosine + H2O = [protein-PII]-L-tyrosine + UMP + H(+). Its activity is regulated as follows. Uridylyltransferase (UTase) activity is inhibited by glutamine, while glutamine activates uridylyl-removing (UR) activity. In terms of biological role, modifies, by uridylylation and deuridylylation, the PII regulatory proteins (GlnB and homologs), in response to the nitrogen status of the cell that GlnD senses through the glutamine level. Under low glutamine levels, catalyzes the conversion of the PII proteins and UTP to PII-UMP and PPi, while under higher glutamine levels, GlnD hydrolyzes PII-UMP to PII and UMP (deuridylylation). Thus, controls uridylylation state and activity of the PII proteins, and plays an important role in the regulation of nitrogen assimilation and metabolism. The chain is Bifunctional uridylyltransferase/uridylyl-removing enzyme from Zymomonas mobilis subsp. mobilis (strain ATCC 31821 / ZM4 / CP4).